A 403-amino-acid polypeptide reads, in one-letter code: F-box protein At1g60400 (403 aa).

The 47-residue stretch at 13-59 (IDRLSALPEHLLCRILSELSTKDSVRTSVLSKHWRNLWLHVPVLELE) folds into the F-box domain.

The polypeptide is F-box protein At1g60400 (Arabidopsis thaliana (Mouse-ear cress)).